The chain runs to 37 residues: Large ribosomal subunit protein bL36 (37 aa).

It belongs to the bacterial ribosomal protein bL36 family.

This is Large ribosomal subunit protein bL36 from Laribacter hongkongensis (strain HLHK9).